Consider the following 199-residue polypeptide: N-(5'-phosphoribosyl)anthranilate isomerase (199 aa).

It belongs to the TrpF family.

The enzyme catalyses N-(5-phospho-beta-D-ribosyl)anthranilate = 1-(2-carboxyphenylamino)-1-deoxy-D-ribulose 5-phosphate. It participates in amino-acid biosynthesis; L-tryptophan biosynthesis; L-tryptophan from chorismate: step 3/5. This chain is N-(5'-phosphoribosyl)anthranilate isomerase, found in Streptococcus pneumoniae serotype 4 (strain ATCC BAA-334 / TIGR4).